Reading from the N-terminus, the 221-residue chain is Octanoyltransferase (221 aa).

Residues 35-221 (ESYENRIIFC…RELLAALLSK (187 aa)) form the BPL/LPL catalytic domain. Residues 80-87 (RGGDITYH), 152-154 (AIG), and 165-167 (GLA) contribute to the substrate site. C183 serves as the catalytic Acyl-thioester intermediate.

The protein belongs to the LipB family.

It localises to the cytoplasm. The catalysed reaction is octanoyl-[ACP] + L-lysyl-[protein] = N(6)-octanoyl-L-lysyl-[protein] + holo-[ACP] + H(+). It functions in the pathway protein modification; protein lipoylation via endogenous pathway; protein N(6)-(lipoyl)lysine from octanoyl-[acyl-carrier-protein]: step 1/2. In terms of biological role, catalyzes the transfer of endogenously produced octanoic acid from octanoyl-acyl-carrier-protein onto the lipoyl domains of lipoate-dependent enzymes. Lipoyl-ACP can also act as a substrate although octanoyl-ACP is likely to be the physiological substrate. In Bacteroides fragilis (strain ATCC 25285 / DSM 2151 / CCUG 4856 / JCM 11019 / LMG 10263 / NCTC 9343 / Onslow / VPI 2553 / EN-2), this protein is Octanoyltransferase.